Here is a 739-residue protein sequence, read N- to C-terminus: Endoglucanase F (739 aa).

An N-terminal signal peptide occupies residues 1 to 27 (MKKILAFLLTVALVAVVAIPQAVVSFA). A catalytic region spans residues 28–470 (ADFNYGEALQ…AKMYEKYGGE (443 aa)). The active-site Nucleophile is the D84. Active-site residues include H400, D438, and E447. The CBM3 domain maps to 480–639 (TPGEEFYVEA…NVRVWGKVPD (160 aa)). The Dockerin domain maps to 664 to 737 (PGIMLGDVNF…ILKLIEKFPA (74 aa)).

Belongs to the glycosyl hydrolase 9 (cellulase E) family. Requires Ca(2+) as cofactor.

The catalysed reaction is Endohydrolysis of (1-&gt;4)-beta-D-glucosidic linkages in cellulose, lichenin and cereal beta-D-glucans.. Functionally, this enzyme catalyzes the endohydrolysis of 1,4-beta-glucosidic linkages in cellulose, lichenin and cereal beta-D-glucans. This Acetivibrio thermocellus (strain ATCC 27405 / DSM 1237 / JCM 9322 / NBRC 103400 / NCIMB 10682 / NRRL B-4536 / VPI 7372) (Clostridium thermocellum) protein is Endoglucanase F (celF).